The primary structure comprises 592 residues: Aspartate--tRNA ligase (592 aa).

Position 173 (Glu173) interacts with L-aspartate. The segment at 197–200 is aspartate; sequence QLFK. Arg219 serves as a coordination point for L-aspartate. ATP-binding positions include 219-221 and Gln228; that span reads RDE. His448 is a binding site for L-aspartate. Position 482 (Glu482) interacts with ATP. Residue Arg489 coordinates L-aspartate. 534–537 is an ATP binding site; sequence GLDR.

It belongs to the class-II aminoacyl-tRNA synthetase family. Type 1 subfamily. Homodimer.

It is found in the cytoplasm. It catalyses the reaction tRNA(Asp) + L-aspartate + ATP = L-aspartyl-tRNA(Asp) + AMP + diphosphate. In terms of biological role, catalyzes the attachment of L-aspartate to tRNA(Asp) in a two-step reaction: L-aspartate is first activated by ATP to form Asp-AMP and then transferred to the acceptor end of tRNA(Asp). The sequence is that of Aspartate--tRNA ligase from Shewanella baltica (strain OS195).